The primary structure comprises 167 residues: SDFKNKLVISDFKYHCTFILGKDKVIKSVNVFELILFGIYKLSIFIPLFLIFIRLLATNILNFLFEVFKSIYSILKILFVVRFKPIRTHFLRPLSVSFIMISNNILLLISSLWYWLRVGKNLLLSTVGDGVGRFCKFRLPKPLLIDLVWNFLLFCFLCDRNFFIEFI.

The protein resides in the mitochondrion. This is an uncharacterized protein from Ascobolus immersus.